Reading from the N-terminus, the 233-residue chain is Large ribosomal subunit protein uL3 (233 aa).

Belongs to the universal ribosomal protein uL3 family. In terms of assembly, part of the 50S ribosomal subunit. Forms a cluster with proteins L14 and L19.

One of the primary rRNA binding proteins, it binds directly near the 3'-end of the 23S rRNA, where it nucleates assembly of the 50S subunit. The sequence is that of Large ribosomal subunit protein uL3 from Ureaplasma urealyticum serovar 10 (strain ATCC 33699 / Western).